The primary structure comprises 203 residues: Endoplasmic reticulum transmembrane protein 3 (203 aa).

Residues 1-6 lie on the Lumenal side of the membrane; sequence MSLYYT. A helical transmembrane segment spans residues 7–27; the sequence is LVFAILVVEIFMFSILALPIP. Residues 28-45 are Cytoplasmic-facing; the sequence is SRYRRPLTLLLLKPFKSS. Residues 46–66 traverse the membrane as a helical segment; the sequence is TVQVAIKCVLGFILLLFIDCI. Over 67–110 the chain is Lumenal; sequence NRVYSIDKELQLSSASQNNGAIIAQDRIEVLSRKFFAQRNMYLT. The helical transmembrane segment at 111–131 threads the bilayer; that stretch reads GITLFLTFVVVRTFGLVIELL. Over 132–203 the chain is Cytoplasmic; it reads TMKDIYRASP…KSESLQEEIN (72 aa). Residues 142-171 are disordered; sequence PVASSDVKKNDSVTAEAAAQSGASKDDHGD.

Belongs to the BCAP29/BCAP31 family.

Its subcellular location is the endoplasmic reticulum membrane. Its function is as follows. May play a role in anterograde transport of membrane proteins from the endoplasmic reticulum to the Golgi. May be involved in invertase secretion. The protein is Endoplasmic reticulum transmembrane protein 3 (YET3) of Saccharomyces cerevisiae (strain ATCC 204508 / S288c) (Baker's yeast).